We begin with the raw amino-acid sequence, 520 residues long: Mu-like prophage FluMu protein gp29 (520 aa).

This sequence to phage Mu protein gp29.

This Haemophilus influenzae (strain ATCC 51907 / DSM 11121 / KW20 / Rd) protein is Mu-like prophage FluMu protein gp29.